A 333-amino-acid polypeptide reads, in one-letter code: Foldase protein PrsA (333 aa).

The signal sequence occupies residues 1 to 22 (MKKSTKLLAGIVTLASAMTLAA). C23 carries N-palmitoyl cysteine lipidation. The S-diacylglycerol cysteine moiety is linked to residue C23. Residues 145–240 (TPEMTTQVIT…NKFYIVKVTK (96 aa)) enclose the PpiC domain. A disordered region spans residues 301 to 333 (DKKASKANTSKSDQKTSSDSSKDSQSSKSKSEK). Over residues 312–322 (SDQKTSSDSSK) the composition is skewed to basic and acidic residues. A compositionally biased stretch (low complexity) spans 323-333 (DSQSSKSKSEK).

The protein belongs to the PrsA family.

Its subcellular location is the cell membrane. It carries out the reaction [protein]-peptidylproline (omega=180) = [protein]-peptidylproline (omega=0). Functionally, plays a major role in protein secretion by helping the post-translocational extracellular folding of several secreted proteins. The chain is Foldase protein PrsA from Streptococcus equi subsp. zooepidemicus (strain MGCS10565).